Reading from the N-terminus, the 259-residue chain is Dickkopf-related protein 2 (259 aa).

The N-terminal stretch at 1–33 (MAALMRVKDSSRCLLLLAAVLMVESSQLGSSRA) is a signal peptide. The disordered stretch occupies residues 42–70 (LGGETPAQSANRSAGMNQGLAFGGSKKGK). Residues 47-57 (PAQSANRSAGM) show a composition bias toward polar residues. Asn-52 carries an N-linked (GlcNAc...) asparagine glycan. Residues 78–127 (CSSDKECEVGRYCHSPHQGSSACMLCRRKKKRCHRDGMCCPGTRCNNGIC) are DKK-type Cys-1. 5 cysteine pairs are disulfide-bonded: Cys-183-Cys-195, Cys-189-Cys-204, Cys-194-Cys-231, Cys-214-Cys-239, and Cys-233-Cys-256. The segment at 183-256 (CLRSSDCIDG…YSSKARLHVC (74 aa)) is DKK-type Cys-2.

The protein belongs to the dickkopf family. In terms of assembly, interacts with LRP5 and LRP6. In terms of processing, may be proteolytically processed by a furin-like protease.

It is found in the secreted. Its function is as follows. Antagonizes canonical Wnt signaling by inhibiting LRP5/6 interaction with Wnt and by forming a ternary complex with the transmembrane protein KREMEN that promotes internalization of LRP5/6. DKKs play an important role in vertebrate development, where they locally inhibit Wnt regulated processes such as antero-posterior axial patterning, limb development, somitogenesis and eye formation. In the adult, Dkks are implicated in bone formation and bone disease, cancer and Alzheimer disease. The protein is Dickkopf-related protein 2 of Mus musculus (Mouse).